Consider the following 324-residue polypeptide: MASYYEILDVPRSASADDIKKAYRRKALQWHPDKNPDNKEFAEKKFKEVAEAYEVLSDKHKREIYDRYGREGLTGTGTGPSRAEAGSGGPGFTFTFRSPEEVFREFFGSGDPFAELFDDLGPFSELQNRGSRHSGPFFTFSSSFPGHSDFSSSSFSFSPGAGAFRSVSTSTTFVQGRRITTRRIMENGQERVEVEEDGQLKSVTINGVPDDLALGLELSRREQQPSVTSRSGGTQVQQTPASCPLDSDLSEDEDLQLAMAYSLSEMEAAGKKPAGGREAQHRRQGRPKAQHQDPGLGGTQEGARGEATKRSPSPEEKASRCLIL.

A2 is modified (N-acetylalanine). Residues 2 to 71 (ASYYEILDVP…REIYDRYGRE (70 aa)) form the J domain. Disordered regions lie at residues 70 to 90 (REGL…SGGP) and 218 to 324 (LSRR…CLIL). 2 consecutive UIM domains span residues 210-226 (DDLA…QQPS) and 250-269 (SEDE…MEAA). A compositionally biased stretch (polar residues) spans 224-241 (QPSVTSRSGGTQVQQTPA). A compositionally biased stretch (basic residues) spans 280-289 (QHRRQGRPKA). Positions 303–324 (ARGEATKRSPSPEEKASRCLIL) are enriched in basic and acidic residues. Position 311 is a phosphoserine (S311). Cysteine methyl ester is present on C321. C321 carries S-geranylgeranyl cysteine lipidation. Residues 321 to 324 (CLIL) carry the CAAX motif motif. Residues 322–324 (LIL) constitute a propeptide, removed in mature form.

As to quaternary structure, interacts with HSP70 (HSPA1A or HSPA1B). Interacts with HSPA8/Hsc70. Interacts with PSMA3 and most probably with the whole proteasomal complex. Ubiquitinated by STUB1; does not lead to proteasomal degradation. In terms of tissue distribution, more abundantly expressed in neocortex, cerebellum, spinal cord and retina where it is expressed by neuronal cells (at protein level). Detected at much lower level in non-neuronal tissues including kidney, lung, heart, skeletal muscle, spleen and testis (at protein level). Isoform 1 is more abundant in neocortex and cerebellum compared to isoform 2 (at protein level).

The protein resides in the cytoplasm. It localises to the nucleus. It is found in the endoplasmic reticulum membrane. Functionally, functions as a co-chaperone, regulating the substrate binding and activating the ATPase activity of chaperones of the HSP70/heat shock protein 70 family. In parallel, also contributes to the ubiquitin-dependent proteasomal degradation of misfolded proteins. Thereby, may regulate the aggregation and promote the functional recovery of misfolded proteins like HTT, MC4R, PRKN, RHO and SOD1 and be crucial for many biological processes. Isoform 1 which is localized to the endoplasmic reticulum membranes may specifically function in ER-associated protein degradation of misfolded proteins. The sequence is that of DnaJ homolog subfamily B member 2 from Homo sapiens (Human).